Here is an 890-residue protein sequence, read N- to C-terminus: Potassium/sodium hyperpolarization-activated cyclic nucleotide-gated channel 1 (890 aa).

The segment at M1–F93 is disordered. Topologically, residues M1–R142 are cytoplasmic. Over residues N8–A34 the composition is skewed to low complexity. Residues D62–P77 show a composition bias toward gly residues. The helical transmembrane segment at F143–I164 threads the bilayer. Residues T165–T173 lie on the Extracellular side of the membrane. Residues P174–F194 traverse the membrane as a helical segment. The Cytoplasmic portion of the chain corresponds to R195–M215. Residues N216–F236 form a helical membrane-spanning segment. At L237 to T260 the chain is on the extracellular side. Residues K261–W281 form a helical; Voltage-sensor membrane-spanning segment. The Cytoplasmic portion of the chain corresponds to E282–V295. Residues V296–L318 traverse the membrane as a helical segment. At V319–Q344 the chain is on the extracellular side. The N-linked (GlcNAc...) asparagine glycan is linked to N338. The pore-forming intramembrane region spans Y345–P366. The Selectivity filter signature appears at C358–G362. The Extracellular segment spans residues V367–D371. The helical transmembrane segment at L372 to H392 threads the bilayer. Over A393 to L890 the chain is Cytoplasmic. Residues G539, E540, C542, R549, T550, R590, and R593 each coordinate 3',5'-cyclic AMP. 2 stretches are compositionally biased toward low complexity: residues M644–S691 and Q731–Q749. Disordered stretches follow at residues M644–A692, S725–E796, and M845–L890. The segment covering S770–T780 has biased composition (polar residues). Pro residues predominate over residues R854 to A865. Over residues D880–L890 the composition is skewed to basic and acidic residues.

Belongs to the potassium channel HCN family. As to quaternary structure, homotetramer. Heterotetramer with HCN2. The potassium channel is composed of a homo- or heterotetrameric complex of pore-forming subunits. Interacts with KCNE2. Interacts with the SH3 domain of CSK. In terms of tissue distribution, detected in brain, in particular in amygdala and hippocampus, while expression in caudate nucleus, corpus callosum, substantia nigra, subthalamic nucleus and thalamus is very low or not detectable. Detected at very low levels in muscle and pancreas.

It is found in the cell membrane. The catalysed reaction is Na(+)(in) = Na(+)(out). It catalyses the reaction K(+)(in) = K(+)(out). Its activity is regulated as follows. Activated by cAMP, and at 10-100 times higher concentrations, also by cGMP. cAMP binding promotes tetramerization and formation of an active channel. Compared to other family members, cAMP has less stimulatory effect on HCN1 because part of the molecules already contain bound cAMP and form homotetramers when cAMP levels are low, this inherent tetramerization in HCN1 results in a weaker response to increased cAMP. Inhibited by Cs(1+), zatebradine, capsazepine and ZD7288. Hyperpolarization-activated ion channel that are permeable to sodium and potassium ions. Displays lower selectivity for K(+) over Na(+) ions. Contributes to the native pacemaker currents in heart (If) and in the generation of the I(h) current which controls neuron excitability. Participates in cerebellar mechanisms of motor learning. May mediate responses to sour stimuli. In Homo sapiens (Human), this protein is Potassium/sodium hyperpolarization-activated cyclic nucleotide-gated channel 1 (HCN1).